We begin with the raw amino-acid sequence, 37 residues long: ATP synthase subunit O, mitochondrial (37 aa).

This sequence belongs to the ATPase delta chain family. In terms of assembly, F-type ATPases have 2 components, CF(1) - the catalytic core - and CF(0) - the membrane proton channel. CF(1) has five subunits: alpha(3), beta(3), gamma(1), delta(1), epsilon(1). CF(0) has three main subunits: a, b and c.

It is found in the mitochondrion. Its subcellular location is the mitochondrion inner membrane. In terms of biological role, mitochondrial membrane ATP synthase (F(1)F(0) ATP synthase or Complex V) produces ATP from ADP in the presence of a proton gradient across the membrane which is generated by electron transport complexes of the respiratory chain. F-type ATPases consist of two structural domains, F(1) - containing the extramembraneous catalytic core and F(0) - containing the membrane proton channel, linked together by a central stalk and a peripheral stalk. During catalysis, ATP synthesis in the catalytic domain of F(1) is coupled via a rotary mechanism of the central stalk subunits to proton translocation. Part of the complex F(0) domain and the peripheric stalk, which acts as a stator to hold the catalytic alpha(3)beta(3) subcomplex and subunit a/ATP6 static relative to the rotary elements. The polypeptide is ATP synthase subunit O, mitochondrial (Solanum tuberosum (Potato)).